The primary structure comprises 357 residues: Ribosomal RNA small subunit methyltransferase C (357 aa).

The protein belongs to the methyltransferase superfamily. RsmC family. In terms of assembly, monomer.

Its subcellular location is the cytoplasm. It carries out the reaction guanosine(1207) in 16S rRNA + S-adenosyl-L-methionine = N(2)-methylguanosine(1207) in 16S rRNA + S-adenosyl-L-homocysteine + H(+). In terms of biological role, specifically methylates the guanine in position 1207 of 16S rRNA in the 30S particle. This chain is Ribosomal RNA small subunit methyltransferase C, found in Colwellia psychrerythraea (strain 34H / ATCC BAA-681) (Vibrio psychroerythus).